The chain runs to 537 residues: Cytochrome c oxidase subunit 1 (537 aa).

The chain crosses the membrane as a helical span at residues 22–42 (ILYLLFGLVSGIIGSVFSFII). Positions 45, 48, and 50 each coordinate Ca(2+). A Fe(II)-heme a-binding site is contributed by histidine 68. 8 helical membrane-spanning segments follow: residues 70-90 (ILMIFFFIIPALFGAFGNYLV), 104-124 (VNNFTFWLLPPALMLLLISAL), 152-172 (LAILSLQLTGISSTLGSVNLI), 190-210 (LFAWAIMITSILLLLTLPVLA), 241-261 (LFWFFGHPEVYILIMPAFGVV), 279-299 (MLWAMLSIALLGLMVWSHHLF), 318-338 (IAIPTGIKIFSWLATLTGGAI), and 345-365 (MLYAIGFLILFTIGGLTGVIL). Residue histidine 247 coordinates Cu cation. The 1'-histidyl-3'-tyrosine (His-Tyr) cross-link spans 247–251 (HPEVY). Tyrosine 251 lines the O2 pocket. 2 residues coordinate Cu cation: histidine 296 and histidine 297. The Mg(2+) site is built by histidine 375 and aspartate 376. The next 2 helical transmembrane spans lie at 379–399 (FVVAHFHYVLSMGALFGLCGA) and 418–438 (IQFWILFIGVNIVFGPQHFLG). Histidine 383 provides a ligand contact to heme a3. Histidine 385 provides a ligand contact to Fe(II)-heme a. Ca(2+) is bound at residue proline 447. A helical transmembrane segment spans residues 458 to 478 (FVSSIGSVISILSLFLFMYVM).

The protein belongs to the heme-copper respiratory oxidase family. In terms of assembly, component of the cytochrome c oxidase (complex IV, CIV), a multisubunit enzyme composed of a catalytic core of 3 subunits and several supernumerary subunits. The complex exists as a monomer or a dimer and forms supercomplexes (SCs) in the inner mitochondrial membrane with ubiquinol-cytochrome c oxidoreductase (cytochrome b-c1 complex, complex III, CIII). Requires heme as cofactor. The cofactor is Cu cation.

It is found in the mitochondrion inner membrane. The catalysed reaction is 4 Fe(II)-[cytochrome c] + O2 + 8 H(+)(in) = 4 Fe(III)-[cytochrome c] + 2 H2O + 4 H(+)(out). It participates in energy metabolism; oxidative phosphorylation. In terms of biological role, component of the cytochrome c oxidase, the last enzyme in the mitochondrial electron transport chain which drives oxidative phosphorylation. The respiratory chain contains 3 multisubunit complexes succinate dehydrogenase (complex II, CII), ubiquinol-cytochrome c oxidoreductase (cytochrome b-c1 complex, complex III, CIII) and cytochrome c oxidase (complex IV, CIV), that cooperate to transfer electrons derived from NADH and succinate to molecular oxygen, creating an electrochemical gradient over the inner membrane that drives transmembrane transport and the ATP synthase. Cytochrome c oxidase is the component of the respiratory chain that catalyzes the reduction of oxygen to water. Electrons originating from reduced cytochrome c in the intermembrane space (IMS) are transferred via the dinuclear copper A center (CU(A)) of subunit 2 and heme A of subunit 1 to the active site in subunit 1, a binuclear center (BNC) formed by heme A3 and copper B (CU(B)). The BNC reduces molecular oxygen to 2 water molecules using 4 electrons from cytochrome c in the IMS and 4 protons from the mitochondrial matrix. This Schizosaccharomyces pombe (strain 972 / ATCC 24843) (Fission yeast) protein is Cytochrome c oxidase subunit 1 (cox1).